The sequence spans 564 residues: Agglutinin (564 aa).

An N-terminal signal peptide occupies residues 1-24 (MYAVATWLCFGSTSGWSFTLEDNN). A beta-D-galactose-binding site is contributed by 32–34 (IIN). Residue Asn34 is glycosylated (N-linked (GlcNAc...) asparagine). Active-site residues include Tyr104, Tyr147, Glu200, and Arg203. AMP is bound by residues 104-105 (YV) and 145-147 (GNY). N-linked (GlcNAc...) asparagine glycosylation occurs at Asn259. Cysteines 282 and 306 form a disulfide. The propeptide at 291–302 (SLLIRPVVPNFN) is linker peptide. The 128-residue stretch at 309–436 (PEPIVRIVGR…YAVSQGWLPT (128 aa)) folds into the Ricin B-type lectin 1 domain. Beta-D-galactose-binding positions include Ile312, 324–328 (DVTGE), Gln337, Lys342, and Asn348. The stretch at 319 to 361 (NGLCVDVTGEEFFDGNPIQLWPCKSNTDWNQLWTLRKDSTIRS) is one 1-alpha repeat. The cysteines at positions 322 and 341 are disulfide-linked. One copy of the 1-beta repeat lies at 362 to 402 (NGKCLTISKSSPRQQVVIYNCSTATVGATRWQIWDNRTIIN). Cys365 and Cys382 form a disulfide bridge. N-linked (GlcNAc...) asparagine glycosylation is found at Asn397 and Asn437. The 1-gamma repeat unit spans residues 405-437 (SGLVLAATSGNSGTKLTVQTNIYAVSQGWLPTN). Asn437 serves as a coordination point for beta-D-galactose. The Ricin B-type lectin 2 domain occupies 439-563 (TQPFVTTIVG…GNLNQIWLPL (125 aa)). One copy of the 2-alpha repeat lies at 450–485 (YGMCLQANSGKVWLEDCTSEKAEQQWALYADGSIRP). 2 disulfide bridges follow: Cys453-Cys466 and Cys492-Cys509. Residues 489-528 (RDNCLTTDANIKGTVVKILSCGPASSGQRWMFKNDGTILN) form a 2-beta repeat. The stretch at 531 to 558 (NGLVLDVRRSDPSLKQIIVHPFHGNLNQ) is one 2-gamma repeat.

This sequence in the N-terminal section; belongs to the ribosome-inactivating protein family. Type 2 RIP subfamily.

The enzyme catalyses Endohydrolysis of the N-glycosidic bond at one specific adenosine on the 28S rRNA.. The protein is Agglutinin of Ricinus communis (Castor bean).